A 699-amino-acid chain; its full sequence is tRNA 5-methylaminomethyl-2-thiouridine biosynthesis bifunctional protein MnmC (699 aa).

The tRNA (mnm(5)s(2)U34)-methyltransferase stretch occupies residues 1–260; it reads MTAKPHISCQ…ERKLLRQQAN (260 aa). The tract at residues 282-699 is FAD-dependent cmnm(5)s(2)U34 oxidoreductase; sequence IGGGLASAHL…LRKLLKGKAL (418 aa).

This sequence in the N-terminal section; belongs to the methyltransferase superfamily. tRNA (mnm(5)s(2)U34)-methyltransferase family. It in the C-terminal section; belongs to the DAO family. It depends on FAD as a cofactor.

It localises to the cytoplasm. The enzyme catalyses 5-aminomethyl-2-thiouridine(34) in tRNA + S-adenosyl-L-methionine = 5-methylaminomethyl-2-thiouridine(34) in tRNA + S-adenosyl-L-homocysteine + H(+). Functionally, catalyzes the last two steps in the biosynthesis of 5-methylaminomethyl-2-thiouridine (mnm(5)s(2)U) at the wobble position (U34) in tRNA. Catalyzes the FAD-dependent demodification of cmnm(5)s(2)U34 to nm(5)s(2)U34, followed by the transfer of a methyl group from S-adenosyl-L-methionine to nm(5)s(2)U34, to form mnm(5)s(2)U34. The polypeptide is tRNA 5-methylaminomethyl-2-thiouridine biosynthesis bifunctional protein MnmC (Shewanella oneidensis (strain ATCC 700550 / JCM 31522 / CIP 106686 / LMG 19005 / NCIMB 14063 / MR-1)).